The sequence spans 350 residues: Hydroxymethylglutaryl-CoA synthase (350 aa).

Glutamate 83 (proton donor/acceptor) is an active-site residue. Catalysis depends on cysteine 115, which acts as the Acyl-thioester intermediate. Cysteine 115 and threonine 156 together coordinate (3S)-3-hydroxy-3-methylglutaryl-CoA. Arginine 204 contacts CoA. Residues threonine 206 and histidine 239 each coordinate (3S)-3-hydroxy-3-methylglutaryl-CoA. Catalysis depends on histidine 239, which acts as the Proton donor/acceptor. Residue lysine 244 participates in CoA binding. 2 residues coordinate (3S)-3-hydroxy-3-methylglutaryl-CoA: asparagine 271 and serine 301.

It belongs to the thiolase-like superfamily. Archaeal HMG-CoA synthase family. Interacts with acetoacetyl-CoA thiolase that catalyzes the precedent step in the pathway and with a DUF35 protein. The acetoacetyl-CoA thiolase/HMG-CoA synthase complex channels the intermediate via a fused CoA-binding site, which allows for efficient coupling of the endergonic thiolase reaction with the exergonic HMGCS reaction.

The catalysed reaction is acetoacetyl-CoA + acetyl-CoA + H2O = (3S)-3-hydroxy-3-methylglutaryl-CoA + CoA + H(+). The protein operates within metabolic intermediate biosynthesis; (R)-mevalonate biosynthesis; (R)-mevalonate from acetyl-CoA: step 2/3. Functionally, catalyzes the condensation of acetyl-CoA with acetoacetyl-CoA to form 3-hydroxy-3-methylglutaryl-CoA (HMG-CoA). Functions in the mevalonate (MVA) pathway leading to isopentenyl diphosphate (IPP), a key precursor for the biosynthesis of isoprenoid compounds that are building blocks of archaeal membrane lipids. This Pyrococcus horikoshii (strain ATCC 700860 / DSM 12428 / JCM 9974 / NBRC 100139 / OT-3) protein is Hydroxymethylglutaryl-CoA synthase.